The chain runs to 235 residues: Phosphoribosylaminoimidazole-succinocarboxamide synthase (235 aa).

It belongs to the SAICAR synthetase family.

It catalyses the reaction 5-amino-1-(5-phospho-D-ribosyl)imidazole-4-carboxylate + L-aspartate + ATP = (2S)-2-[5-amino-1-(5-phospho-beta-D-ribosyl)imidazole-4-carboxamido]succinate + ADP + phosphate + 2 H(+). The protein operates within purine metabolism; IMP biosynthesis via de novo pathway; 5-amino-1-(5-phospho-D-ribosyl)imidazole-4-carboxamide from 5-amino-1-(5-phospho-D-ribosyl)imidazole-4-carboxylate: step 1/2. This is Phosphoribosylaminoimidazole-succinocarboxamide synthase from Exiguobacterium sibiricum (strain DSM 17290 / CCUG 55495 / CIP 109462 / JCM 13490 / 255-15).